Here is a 98-residue protein sequence, read N- to C-terminus: Putative defensin-like protein 233 (98 aa).

The first 28 residues, 1-28 (MGMWCTTLFMVSCVSICLILSHVQEVEA), serve as a signal peptide directing secretion. 4 cysteine pairs are disulfide-bonded: C35–C96, C45–C70, C53–C86, and C68–C88.

It belongs to the DEFL family. Expressed at least in stem, root, rosette leaves and flower buds.

It is found in the secreted. The sequence is that of Putative defensin-like protein 233 (SCRL22) from Arabidopsis thaliana (Mouse-ear cress).